Consider the following 167-residue polypeptide: MALKSLVLLSLLVLVLLLVQVQPSLGKESAAAKFRRQHMDSGSSSSSNPNYCNQMMKRRRMTHGRCKPVNTFVHESLDDVKAVCSQKNITCKNGHPNCYQSKSTMSITDCRETGSSKYPNCAYKTSQKQKYITVACEGNPYVPVHFDGAVLLPATPVPSLPPPHRLL.

The N-terminal stretch at 1-26 (MALKSLVLLSLLVLVLLLVQVQPSLG) is a signal peptide. Positions 33 and 36 each coordinate substrate. The Proton acceptor role is filled by histidine 38. Cystine bridges form between cysteine 52–cysteine 110, cysteine 66–cysteine 121, cysteine 84–cysteine 136, and cysteine 91–cysteine 98. 67-71 (KPVNT) is a binding site for substrate. Asparagine 88 carries an N-linked (GlcNAc...) asparagine glycan. Lysine 92 and arginine 111 together coordinate substrate. Histidine 145 acts as the Proton donor in catalysis. O-linked (GalNAc...) threonine glycosylation is present at threonine 155. Serine 159 carries an O-linked (GalNAc...) serine glycan.

Belongs to the pancreatic ribonuclease family.

It localises to the secreted. The polypeptide is Brain ribonuclease (BRN) (Bos taurus (Bovine)).